The primary structure comprises 184 residues: ATP synthase subunit b, chloroplastic (184 aa).

Residues 27 to 49 (LATNPINLSVVLGVLIFFGKGVL) traverse the membrane as a helical segment.

It belongs to the ATPase B chain family. As to quaternary structure, F-type ATPases have 2 components, F(1) - the catalytic core - and F(0) - the membrane proton channel. F(1) has five subunits: alpha(3), beta(3), gamma(1), delta(1), epsilon(1). F(0) has four main subunits: a(1), b(1), b'(1) and c(10-14). The alpha and beta chains form an alternating ring which encloses part of the gamma chain. F(1) is attached to F(0) by a central stalk formed by the gamma and epsilon chains, while a peripheral stalk is formed by the delta, b and b' chains.

The protein resides in the plastid. It is found in the chloroplast thylakoid membrane. In terms of biological role, f(1)F(0) ATP synthase produces ATP from ADP in the presence of a proton or sodium gradient. F-type ATPases consist of two structural domains, F(1) containing the extramembraneous catalytic core and F(0) containing the membrane proton channel, linked together by a central stalk and a peripheral stalk. During catalysis, ATP synthesis in the catalytic domain of F(1) is coupled via a rotary mechanism of the central stalk subunits to proton translocation. Functionally, component of the F(0) channel, it forms part of the peripheral stalk, linking F(1) to F(0). This Morus indica (Mulberry) protein is ATP synthase subunit b, chloroplastic.